The following is a 633-amino-acid chain: Lysophospholipase 1 (633 aa).

An N-terminal signal peptide occupies residues 1–20 (MKTTTVACAVAGLLFSCVSG). Residues 47–594 (GCPASRPTIR…QRYCWDGSLN (548 aa)) enclose the PLA2c domain. 18 N-linked (GlcNAc...) asparagine glycosylation sites follow: N64, N104, N139, N173, N246, N290, N329, N358, N397, N450, N463, N469, N497, N500, N521, N549, N555, and N594. S609 carries GPI-like-anchor amidated serine lipidation. Residues 610–633 (AASGIIPSISTVAMAVVFAAWTIF) constitute a propeptide, removed in mature form.

It belongs to the lysophospholipase family. Post-translationally, the GPI-like anchor contains a phosphoceramide lipid group. The anchor position has not been determined.

Its subcellular location is the cell membrane. The enzyme catalyses a 1-acyl-sn-glycero-3-phosphocholine + H2O = sn-glycerol 3-phosphocholine + a fatty acid + H(+). Catalyzes the release of fatty acids from lysophospholipids. This is Lysophospholipase 1 (plb1) from Aspergillus fumigatus (strain CBS 144.89 / FGSC A1163 / CEA10) (Neosartorya fumigata).